Consider the following 503-residue polypeptide: Glycosyltransferase family 92 protein ZK381.2 (503 aa).

Residues 7 to 27 (YKPCLLIILIFNSVILLFILI) traverse the membrane as a helical segment. The 286-residue stretch at 156-441 (KPVIICISPQ…FKCYFDSFYK (286 aa)) folds into the GT92 domain.

This sequence belongs to the glycosyltransferase 92 family.

Its subcellular location is the membrane. This Caenorhabditis elegans protein is Glycosyltransferase family 92 protein ZK381.2.